Here is a 273-residue protein sequence, read N- to C-terminus: Dermonecrotic toxin LdSicTox-alphaIB3avi (273 aa).

His-5 is an active-site residue. 2 residues coordinate Mg(2+): Glu-25 and Asp-27. His-41 (nucleophile) is an active-site residue. 2 cysteine pairs are disulfide-bonded: Cys-45–Cys-51 and Cys-47–Cys-190. Asp-85 is a Mg(2+) binding site.

Belongs to the arthropod phospholipase D family. Class II subfamily. Mg(2+) is required as a cofactor. In terms of tissue distribution, expressed by the venom gland.

Its subcellular location is the secreted. The catalysed reaction is an N-(acyl)-sphingosylphosphocholine = an N-(acyl)-sphingosyl-1,3-cyclic phosphate + choline. It catalyses the reaction an N-(acyl)-sphingosylphosphoethanolamine = an N-(acyl)-sphingosyl-1,3-cyclic phosphate + ethanolamine. The enzyme catalyses a 1-acyl-sn-glycero-3-phosphocholine = a 1-acyl-sn-glycero-2,3-cyclic phosphate + choline. It carries out the reaction a 1-acyl-sn-glycero-3-phosphoethanolamine = a 1-acyl-sn-glycero-2,3-cyclic phosphate + ethanolamine. Its function is as follows. Dermonecrotic toxins cleave the phosphodiester linkage between the phosphate and headgroup of certain phospholipids (sphingolipid and lysolipid substrates), forming an alcohol (often choline) and a cyclic phosphate. This toxin acts on sphingomyelin (SM). It may also act on ceramide phosphoethanolamine (CPE), lysophosphatidylcholine (LPC) and lysophosphatidylethanolamine (LPE), but not on lysophosphatidylserine (LPS), and lysophosphatidylglycerol (LPG). It acts by transphosphatidylation, releasing exclusively cyclic phosphate products as second products. Induces dermonecrosis, hemolysis, increased vascular permeability, edema, inflammatory response, and platelet aggregation. This Loxosceles deserta (Desert recluse spider) protein is Dermonecrotic toxin LdSicTox-alphaIB3avi.